Reading from the N-terminus, the 176-residue chain is Large ribosomal subunit protein uL10 (176 aa).

It belongs to the universal ribosomal protein uL10 family. Part of the ribosomal stalk of the 50S ribosomal subunit. The N-terminus interacts with L11 and the large rRNA to form the base of the stalk. The C-terminus forms an elongated spine to which L12 dimers bind in a sequential fashion forming a multimeric L10(L12)X complex.

Forms part of the ribosomal stalk, playing a central role in the interaction of the ribosome with GTP-bound translation factors. The chain is Large ribosomal subunit protein uL10 from Sorangium cellulosum (strain So ce56) (Polyangium cellulosum (strain So ce56)).